The primary structure comprises 200 residues: ATP synthase subunit b 2 (200 aa).

Residues 1-16 show a composition bias toward polar residues; it reads MAEQNILTTPSPNADT. The tract at residues 1-38 is disordered; it reads MAEQNILTTPSPNADTTIVPPGSPHTHTEQPSGGHGGA. Residues 46 to 66 traverse the membrane as a helical segment; sequence TFLAQLIWLALAFGLLYYLMS.

It belongs to the ATPase B chain family. F-type ATPases have 2 components, F(1) - the catalytic core - and F(0) - the membrane proton channel. F(1) has five subunits: alpha(3), beta(3), gamma(1), delta(1), epsilon(1). F(0) has three main subunits: a(1), b(2) and c(10-14). The alpha and beta chains form an alternating ring which encloses part of the gamma chain. F(1) is attached to F(0) by a central stalk formed by the gamma and epsilon chains, while a peripheral stalk is formed by the delta and b chains.

The protein localises to the cell inner membrane. Functionally, f(1)F(0) ATP synthase produces ATP from ADP in the presence of a proton or sodium gradient. F-type ATPases consist of two structural domains, F(1) containing the extramembraneous catalytic core and F(0) containing the membrane proton channel, linked together by a central stalk and a peripheral stalk. During catalysis, ATP synthesis in the catalytic domain of F(1) is coupled via a rotary mechanism of the central stalk subunits to proton translocation. Its function is as follows. Component of the F(0) channel, it forms part of the peripheral stalk, linking F(1) to F(0). The b'-subunit is a diverged and duplicated form of b found in plants and photosynthetic bacteria. The protein is ATP synthase subunit b 2 (atpF2) of Methylorubrum populi (strain ATCC BAA-705 / NCIMB 13946 / BJ001) (Methylobacterium populi).